The sequence spans 322 residues: Transcription initiation factor IIB (322 aa).

A run of 2 repeats spans residues 125-213 (SLIN…VRDL) and 224-305 (NFVY…EIAQ).

The protein belongs to the TFIIB family.

Its function is as follows. Stabilizes TBP binding to an archaeal box-A promoter. Also responsible for recruiting RNA polymerase II to the pre-initiation complex (DNA-TBP-TFIIB). In Aeropyrum pernix (strain ATCC 700893 / DSM 11879 / JCM 9820 / NBRC 100138 / K1), this protein is Transcription initiation factor IIB.